Reading from the N-terminus, the 140-residue chain is Organic hydroperoxide resistance protein-like (140 aa).

This sequence belongs to the OsmC/Ohr family.

The chain is Organic hydroperoxide resistance protein-like from Staphylococcus aureus (strain bovine RF122 / ET3-1).